A 352-amino-acid chain; its full sequence is Phosphoribosylformylglycinamidine cyclo-ligase (352 aa).

It belongs to the AIR synthase family.

It is found in the cytoplasm. It catalyses the reaction 2-formamido-N(1)-(5-O-phospho-beta-D-ribosyl)acetamidine + ATP = 5-amino-1-(5-phospho-beta-D-ribosyl)imidazole + ADP + phosphate + H(+). The protein operates within purine metabolism; IMP biosynthesis via de novo pathway; 5-amino-1-(5-phospho-D-ribosyl)imidazole from N(2)-formyl-N(1)-(5-phospho-D-ribosyl)glycinamide: step 2/2. The polypeptide is Phosphoribosylformylglycinamidine cyclo-ligase (Pseudomonas fluorescens (strain Pf0-1)).